A 451-amino-acid polypeptide reads, in one-letter code: Trigger factor (451 aa).

The PPIase FKBP-type domain occupies 162-243; it reads GDYAIIDITT…VQQSKERKLP (82 aa).

The protein belongs to the FKBP-type PPIase family. Tig subfamily.

The protein resides in the cytoplasm. It catalyses the reaction [protein]-peptidylproline (omega=180) = [protein]-peptidylproline (omega=0). Functionally, involved in protein export. Acts as a chaperone by maintaining the newly synthesized protein in an open conformation. Functions as a peptidyl-prolyl cis-trans isomerase. The chain is Trigger factor from Corynebacterium aurimucosum (strain ATCC 700975 / DSM 44827 / CIP 107346 / CN-1) (Corynebacterium nigricans).